We begin with the raw amino-acid sequence, 152 residues long: Atypical leghemoglobin 2-1 (152 aa).

The 150-residue stretch at 3–152 (TFSEEQEALV…LAGVIKKGMS (150 aa)) folds into the Globin domain. Tyrosine 31 carries the nitrated tyrosine modification. Serine 46 is a binding site for heme b. Serine 46 bears the Phosphoserine mark. An O2-binding site is contributed by histidine 64. Residues lysine 67, histidine 99, and arginine 102 each contribute to the heme b site. Tyrosine 140 bears the Nitrated tyrosine mark.

It belongs to the plant globin family. Monomer. Post-translationally, nitrated in effective nodules and particularly in hypoxic conditions; this mechanism may play a protective role in the symbiosis by buffering toxic peroxynitrite NO(2)(-). Nitration level decrease during nodule senescence. Phosphorylation at Ser-46 disrupts the molecular environment of its porphyrin ring oxygen binding pocket, thus leading to a reduced oxygen consumption and to the delivery of oxygen O(2) to symbiosomes. In terms of tissue distribution, mainly expressed in leaves and, at low levels, in roots of non-nodulated plants. However, accumulates also in nodules and roots, and, to a lower extent, in leaves, stems, flowers and fruits, in nodulated plants.

In terms of biological role, atypical leghemoglobin that reversibly binds oxygen O(2) through a pentacoordinated heme iron. In nodules, facilitates the diffusion of oxygen to the bacteroids while preventing the bacterial nitrogenase from being inactivated by buffering dioxygen, nitric oxide and carbon monoxide. This role is essential for symbiotic nitrogen fixation (SNF). Seems not restricted to symbiotic nitrogen fixation and root nodules formation, but also contributes to general plant development and metabolism. This chain is Atypical leghemoglobin 2-1, found in Lotus japonicus (Lotus corniculatus var. japonicus).